A 153-amino-acid polypeptide reads, in one-letter code: Endoribonuclease YbeY (153 aa).

Positions 118, 122, and 128 each coordinate Zn(2+).

The protein belongs to the endoribonuclease YbeY family. Requires Zn(2+) as cofactor.

The protein localises to the cytoplasm. In terms of biological role, single strand-specific metallo-endoribonuclease involved in late-stage 70S ribosome quality control and in maturation of the 3' terminus of the 16S rRNA. This chain is Endoribonuclease YbeY, found in Staphylococcus haemolyticus (strain JCSC1435).